The following is a 291-amino-acid chain: 33 kDa chaperonin (291 aa).

Intrachain disulfides connect Cys-237–Cys-239 and Cys-270–Cys-273.

Belongs to the HSP33 family. In terms of processing, under oxidizing conditions two disulfide bonds are formed involving the reactive cysteines. Under reducing conditions zinc is bound to the reactive cysteines and the protein is inactive.

It localises to the cytoplasm. Redox regulated molecular chaperone. Protects both thermally unfolding and oxidatively damaged proteins from irreversible aggregation. Plays an important role in the bacterial defense system toward oxidative stress. This Clostridioides difficile (strain 630) (Peptoclostridium difficile) protein is 33 kDa chaperonin.